The following is a 731-amino-acid chain: Putative pentatricopeptide repeat-containing protein At1g17630 (731 aa).

PPR repeat units lie at residues 88 to 118, 122 to 156, 157 to 191, 192 to 222, 223 to 257, 258 to 292, 293 to 327, 328 to 358, 359 to 393, 398 to 432, 433 to 467, 468 to 498, 499 to 533, 534 to 569, and 570 to 600; these read SGSL…VSLV, DLRL…GLTG, DGYI…GLKE, NLHV…MPVR, NRMS…EFKP, DEVT…GNAV, SGEA…GFEE, YLPS…IRNK, GIES…NHVC, NVVT…KVLA, NSVT…SMSE, NILV…IRDK, DLIS…GFHP, DGIA…GLEP, and QQEH…MPME. The segment at 605-680 is type E motif; the sequence is VLGALLNSCR…VSGSSWIEVK (76 aa). The interval 681 to 711 is type E(+) motif; it reads KKKYKFSSGSIVQSEFETIYPVLEDLVSHML.

The protein belongs to the PPR family. PCMP-E subfamily.

In Arabidopsis thaliana (Mouse-ear cress), this protein is Putative pentatricopeptide repeat-containing protein At1g17630 (PCMP-E72).